Consider the following 28-residue polypeptide: Metallothionein-like protein type 2 LSC210 (28 aa).

The protein belongs to the metallothionein superfamily. Type 15 family.

Functionally, metallothioneins have a high content of cysteine residues that bind various heavy metals. The sequence is that of Metallothionein-like protein type 2 LSC210 (LSC210) from Brassica napus (Rape).